We begin with the raw amino-acid sequence, 233 residues long: Inner kinetochore subunit fta4 (233 aa).

Residues Thr-189 and Thr-191 each carry the phosphothreonine modification.

It belongs to the NKP1 family. Component of the inner kinetochore constitutive centromere-associated network (CCAN) (also known as central kinetochore Sim4 complex in fission yeast), which is composed of at least cnl2, cnp3, cnp20, fta1, fta2, fta3, fta4, fta6, fta7, mal2, mhf1, mhf2, mis6, mis15, mis17, sim4 and wip1.

It localises to the nucleus. The protein localises to the chromosome. The protein resides in the centromere. It is found in the kinetochore. Component of the kinetochore, a multiprotein complex that assembles on centromeric DNA and attaches chromosomes to spindle microtubules, mediating chromosome segregation and sister chromatid segregation during meiosis and mitosis. Component of the inner kinetochore constitutive centromere-associated network (CCAN), which serves as a structural platform for outer kinetochore assembly. Fta2, fta3 and fta4 associate with the central core (cnt) and inner repeat (inr) region of the centromere. This chain is Inner kinetochore subunit fta4 (fta4), found in Schizosaccharomyces pombe (strain 972 / ATCC 24843) (Fission yeast).